The sequence spans 384 residues: MNDLVNLLDLDADALTAYCGELGEKPFRARQLQRWIHQFGASRFDAMSDLAKSLREKLATRAEIRSPAAITDNLSADGTRKWLLDVGNGNAVETVYIPEETRGTLCVSSQAGCAVNCRFCSTGKQGFSRNLTTGEIIGQLWMAEFAMREQLGRGPKDDRVISNVVMMGMGEPLLNYDAVVPAMRLMLDDNAYGLSRRRVTLSTSGVVPMMDRLSKDLPVALAVSLHASNDALRDVLVPLNKKYPLAELMAACRRYLEFAPRDFITFEYCMLDGVNDGVEHARELLKLVADVPCKFNLIPFNPFPESGLKRSNNDQIRRFAQVLMDAGIVTTIRKTRGDDIDAACGQLAGEVKDRTRLAERGKFGKITPLVPVAATGQAGEARPA.

The Proton acceptor role is filled by E93. Residues 99 to 339 (EETRGTLCVS…TTIRKTRGDD (241 aa)) form the Radical SAM core domain. Cysteines 106 and 344 form a disulfide. C113, C117, and C120 together coordinate [4Fe-4S] cluster. S-adenosyl-L-methionine contacts are provided by residues 170-171 (GE), S202, 224-226 (SLH), and N301. Residue C344 is the S-methylcysteine intermediate of the active site.

Belongs to the radical SAM superfamily. RlmN family. Requires [4Fe-4S] cluster as cofactor.

The protein localises to the cytoplasm. It carries out the reaction adenosine(2503) in 23S rRNA + 2 reduced [2Fe-2S]-[ferredoxin] + 2 S-adenosyl-L-methionine = 2-methyladenosine(2503) in 23S rRNA + 5'-deoxyadenosine + L-methionine + 2 oxidized [2Fe-2S]-[ferredoxin] + S-adenosyl-L-homocysteine. The enzyme catalyses adenosine(37) in tRNA + 2 reduced [2Fe-2S]-[ferredoxin] + 2 S-adenosyl-L-methionine = 2-methyladenosine(37) in tRNA + 5'-deoxyadenosine + L-methionine + 2 oxidized [2Fe-2S]-[ferredoxin] + S-adenosyl-L-homocysteine. Functionally, specifically methylates position 2 of adenine 2503 in 23S rRNA and position 2 of adenine 37 in tRNAs. m2A2503 modification seems to play a crucial role in the proofreading step occurring at the peptidyl transferase center and thus would serve to optimize ribosomal fidelity. The polypeptide is Dual-specificity RNA methyltransferase RlmN (Cupriavidus pinatubonensis (strain JMP 134 / LMG 1197) (Cupriavidus necator (strain JMP 134))).